Reading from the N-terminus, the 876-residue chain is AP-5 complex subunit beta-1 (876 aa).

As to quaternary structure, probably part of the adaptor protein complex 5 (AP-5), a tetramer composed of AP5B1, AP5M1, AP5S1 and AP5Z1. Interacts with ZFYVE26 and SPG11.

Its function is as follows. As part of AP-5, a probable fifth adaptor protein complex it may be involved in endosomal transport. The chain is AP-5 complex subunit beta-1 (Ap5b1) from Mus musculus (Mouse).